The primary structure comprises 184 residues: Photosystem I assembly protein Ycf4 (184 aa).

The next 2 helical transmembrane spans lie at 21 to 43 and 63 to 85; these read NFCW…ISSY and GLVM…CAIS.

This sequence belongs to the Ycf4 family.

It localises to the plastid. Its subcellular location is the chloroplast thylakoid membrane. In terms of biological role, seems to be required for the assembly of the photosystem I complex. In Spinacia oleracea (Spinach), this protein is Photosystem I assembly protein Ycf4.